The following is a 179-amino-acid chain: Ribosome maturation factor RimM (179 aa).

Residues 95–174 (KDEFFYFDIL…QIFCTQDAFL (80 aa)) enclose the PRC barrel domain.

It belongs to the RimM family. Binds ribosomal protein uS19.

Its subcellular location is the cytoplasm. In terms of biological role, an accessory protein needed during the final step in the assembly of 30S ribosomal subunit, possibly for assembly of the head region. Essential for efficient processing of 16S rRNA. May be needed both before and after RbfA during the maturation of 16S rRNA. It has affinity for free ribosomal 30S subunits but not for 70S ribosomes. This Campylobacter jejuni subsp. jejuni serotype O:2 (strain ATCC 700819 / NCTC 11168) protein is Ribosome maturation factor RimM.